A 307-amino-acid polypeptide reads, in one-letter code: Small ribosomal subunit biogenesis GTPase RsgA (307 aa).

The segment at 1–21 (MPSEHPFSDGIPTPNPKETMN) is disordered. The region spanning 85 to 242 (RQDAWKTKLI…LIDSPGLQEF (158 aa)) is the CP-type G domain. GTP contacts are provided by residues 135-138 (NKAD) and 184-192 (GQSGMGKST). Zn(2+)-binding residues include C266, C271, H273, and C279.

This sequence belongs to the TRAFAC class YlqF/YawG GTPase family. RsgA subfamily. As to quaternary structure, monomer. Associates with 30S ribosomal subunit, binds 16S rRNA. Requires Zn(2+) as cofactor.

The protein localises to the cytoplasm. One of several proteins that assist in the late maturation steps of the functional core of the 30S ribosomal subunit. Helps release RbfA from mature subunits. May play a role in the assembly of ribosomal proteins into the subunit. Circularly permuted GTPase that catalyzes slow GTP hydrolysis, GTPase activity is stimulated by the 30S ribosomal subunit. The sequence is that of Small ribosomal subunit biogenesis GTPase RsgA from Neisseria meningitidis serogroup B (strain ATCC BAA-335 / MC58).